A 149-amino-acid polypeptide reads, in one-letter code: MFNKILVVCVGNVCRSPTAERLLKRFHPSLTVASAGLGALVGKGADPAAASVASAHDLSLENHCARQISARLCREYDLILTMEKRHIAALCDIAPEMRGKVMLFGHWDSEREIPDPYRKSRDAFEAVYTLLERSARQWAQALNAEQGKP.

Residue Cys-9 is the Nucleophile of the active site. The active site involves Arg-15. The active-site Proton donor is the Asp-115.

It belongs to the low molecular weight phosphotyrosine protein phosphatase family.

It carries out the reaction O-phospho-L-tyrosyl-[protein] + H2O = L-tyrosyl-[protein] + phosphate. It participates in glycan metabolism; exopolysaccharide biosynthesis. In terms of biological role, dephosphorylates Wzc. Required for the extracellular polysaccharide colanic acid synthesis. Probably involved in the export of colanic acid from the cell to medium. Involved in protection of cells against contact-dependent growth inhibition (CDI). This chain is Low molecular weight protein-tyrosine-phosphatase Wzb (wzb), found in Salmonella typhimurium (strain LT2 / SGSC1412 / ATCC 700720).